Here is a 493-residue protein sequence, read N- to C-terminus: Homeobox protein abdominal-B (493 aa).

Over residues 1 to 29 the composition is skewed to low complexity; it reads MQQHHLQQQQQQQQQQEQQHLQEQQQHLQ. Disordered stretches follow at residues 1 to 199, 322 to 360, and 438 to 475; these read MQQH…APGQ, AAAR…SSGA, and RRMK…HHSG. The span at 30-39 shows a compositional bias: basic residues; the sequence is QLHHHAHHHL. 2 stretches are compositionally biased toward low complexity: residues 54–95 and 105–134; these read PHLQ…THAV and LVAV…QQLA. Residues 144–153 are compositionally biased toward polar residues; the sequence is PAQTPTGPSA. Residues 154–173 are compositionally biased toward low complexity; sequence QQQQHLTSPHHQQLPQQQTP. Over residues 174 to 184 the composition is skewed to polar residues; the sequence is NSVASGASSNL. Over residues 329-345 the composition is skewed to low complexity; the sequence is EGTSTSSYEPPTYSSPG. Residues 387 to 446 constitute a DNA-binding region (homeobox); it reads VRKKRKPYSKFQTLELEKEFLFNAYVSKQKRWELARNLQLTERQVKIWFQNRRMKNKKNS. The segment covering 447–475 has biased composition (low complexity); the sequence is QRQANQQNNNNNSSSNHNHAQATQQHHSG.

This sequence belongs to the Abd-B homeobox family. In terms of tissue distribution, isoform M and isoform R are expressed in ectodermal and mesodermal tissues and central nervous system of fourth to ninth embryonic abdominal segments. Later in embryogenesis, expression is seen in visceral mesoderm surrounding hindgut and in two Malpighian tubules.

It is found in the nucleus. Its function is as follows. Sequence-specific transcription factor which is part of a developmental regulatory system that provides cells with specific positional identities on the anterior-posterior axis. The polypeptide is Homeobox protein abdominal-B (Abd-B) (Drosophila melanogaster (Fruit fly)).